The primary structure comprises 102 residues: Small ribosomal subunit protein uS10 (102 aa).

Belongs to the universal ribosomal protein uS10 family. In terms of assembly, part of the 30S ribosomal subunit.

Its function is as follows. Involved in the binding of tRNA to the ribosomes. The protein is Small ribosomal subunit protein uS10 of Methanobrevibacter smithii (strain ATCC 35061 / DSM 861 / OCM 144 / PS).